The sequence spans 609 residues: MTDDTKGTKFDPKEGCSDWFVLEAECSDNSLDGDLEKLFEEGNDTDISDLIDDEDTVQGNSRELLCQQQSEESEQQIHLLKRKYFSSQEILQLSPRLQSITISPQHKSKRRLFEGDSGLELSFNEAEDFTQQTLEVQEVSASGSEPADQGAKGLGIVKDLLKCSNVKAMLLAKFKEAFGVGFMELTRQYKSCKTCCRDWVVTLYAVQDELIESSKQLLLQHCAYIWLQHMPPMCLYLLCFNVGKSRETVFRLLMNLLQVAEVQILAEPPKLRSTLSALFWYKGSMNPNVYAHGEYPEWIMTQTMINHQSAEATQFDLSTMIQYAYDNDLINEDEIAYNYAKLADTDANARAFLQHNSQARFVRECALMVRYYKRGEMKDMSISAWIHNKMLVVEGEGHWSDIVKFVRFQDINFIRFLDVFKSFLHNTPKKNCLLFYGPPDTGKSMFTMSLIKVLKGKVLSFANYKSNFWLQPLADTKIALIDDVTHVCWDYIDQYLRNGLDGNFVCLDLKHRAPCQIKFPPLLLTSNMDIMKEERYRYLHSRVHAFAFPNKFPFDSNNKPQFRLTDQSWKSFFERLWKQLDLSDQEDEGDDGHTQRSFQCTAREPNGHL.

The short motif at 81 to 83 (KRK) is the Nuclear localization signal element. A phosphoserine; by host mark is found at Ser87 and Ser94. Residues 93 to 102 (LSPRLQSITI) carry the Nuclear export signal motif. Positions 149-312 (QGAKGLGIVK…TMINHQSAEA (164 aa)) are DNA-binding region. Positions 411–561 (INFIRFLDVF…FPFDSNNKPQ (151 aa)) constitute an SF3 helicase domain. 437–444 (GPPDTGKS) is a binding site for ATP. Lys518 is covalently cross-linked (Glycyl lysine isopeptide (Lys-Gly) (interchain with G-Cter in SUMO)). Positions 584 to 609 (DQEDEGDDGHTQRSFQCTAREPNGHL) are disordered.

This sequence belongs to the papillomaviridae E1 protein family. Can form hexamers. Interacts with E2 protein; this interaction increases E1 DNA binding specificity. Interacts with host DNA polymerase subunit POLA2. Interacts with host single stranded DNA-binding protein RPA1. Interacts with host TOP1; this interaction stimulates the enzymatic activity of TOP1. In terms of processing, phosphorylated. Sumoylated.

It is found in the host nucleus. The enzyme catalyses Couples ATP hydrolysis with the unwinding of duplex DNA by translocating in the 3'-5' direction.. It catalyses the reaction ATP + H2O = ADP + phosphate + H(+). ATP-dependent DNA 3'-5' helicase required for initiation of viral DNA replication. It forms a complex with the viral E2 protein. The E1-E2 complex binds to the replication origin which contains binding sites for both proteins. During the initial step, a dimer of E1 interacts with a dimer of protein E2 leading to a complex that binds the viral origin of replication with high specificity. Then, a second dimer of E1 displaces the E2 dimer in an ATP-dependent manner to form the E1 tetramer. Following this, two E1 monomers are added to each half of the site, which results in the formation of two E1 trimers on the viral ori. Subsequently, two hexamers will be created. The double hexamer acts as a bi-directional helicase machinery and unwinds the viral DNA and then recruits the host DNA polymerase to start replication. This Human papillomavirus 37 protein is Replication protein E1.